The chain runs to 689 residues: Glycine--tRNA ligase beta subunit (689 aa).

This sequence belongs to the class-II aminoacyl-tRNA synthetase family. Tetramer of two alpha and two beta subunits.

The protein resides in the cytoplasm. The catalysed reaction is tRNA(Gly) + glycine + ATP = glycyl-tRNA(Gly) + AMP + diphosphate. This chain is Glycine--tRNA ligase beta subunit, found in Pseudoalteromonas translucida (strain TAC 125).